Consider the following 35-residue polypeptide: Probable endonuclease 4 (35 aa).

Glu-15 provides a ligand contact to Zn(2+).

The protein belongs to the AP endonuclease 2 family. It depends on Zn(2+) as a cofactor.

It catalyses the reaction Endonucleolytic cleavage to 5'-phosphooligonucleotide end-products.. Functionally, endonuclease IV plays a role in DNA repair. It cleaves phosphodiester bonds at apurinic or apyrimidinic (AP) sites, generating a 3'-hydroxyl group and a 5'-terminal sugar phosphate. The protein is Probable endonuclease 4 (nfo) of Yersinia enterocolitica.